The following is a 295-amino-acid chain: Probable cell division protein WhiA (295 aa).

Residues 262-293 (SLRELGKKLNLTKSQIYSKLKRIIKIAERFGD) constitute a DNA-binding region (H-T-H motif).

Belongs to the WhiA family.

In terms of biological role, involved in cell division and chromosome segregation. This chain is Probable cell division protein WhiA, found in Thermotoga maritima (strain ATCC 43589 / DSM 3109 / JCM 10099 / NBRC 100826 / MSB8).